Here is a 142-residue protein sequence, read N- to C-terminus: Peptide methionine sulfoxide reductase MsrB (142 aa).

Residues 2–125 (IKKNKNDLNE…NSAAVQFIPY (124 aa)) form the MsrB domain. The active-site Nucleophile is C114.

The protein belongs to the MsrB Met sulfoxide reductase family.

It carries out the reaction L-methionyl-[protein] + [thioredoxin]-disulfide + H2O = L-methionyl-(R)-S-oxide-[protein] + [thioredoxin]-dithiol. The polypeptide is Peptide methionine sulfoxide reductase MsrB (Staphylococcus saprophyticus subsp. saprophyticus (strain ATCC 15305 / DSM 20229 / NCIMB 8711 / NCTC 7292 / S-41)).